We begin with the raw amino-acid sequence, 407 residues long: uncharacterized protein (407 aa).

This is an uncharacterized protein from Saimiriine herpesvirus 2 (strain 11) (SaHV-2).